A 486-amino-acid polypeptide reads, in one-letter code: Galactose-1-phosphate uridylyltransferase (486 aa).

This sequence belongs to the galactose-1-phosphate uridylyltransferase type 2 family.

It is found in the cytoplasm. The catalysed reaction is alpha-D-galactose 1-phosphate + UDP-alpha-D-glucose = alpha-D-glucose 1-phosphate + UDP-alpha-D-galactose. It functions in the pathway carbohydrate metabolism; galactose metabolism. This is Galactose-1-phosphate uridylyltransferase from Lacticaseibacillus paracasei (strain ATCC 334 / BCRC 17002 / CCUG 31169 / CIP 107868 / KCTC 3260 / NRRL B-441) (Lactobacillus paracasei).